A 553-amino-acid polypeptide reads, in one-letter code: Putative transport protein ASA_0825 (553 aa).

Transmembrane regions (helical) follow at residues 4-24, 29-49, 65-85, 95-115, and 158-178; these read IALS…LGNW, VGLG…FAGV, FGLI…FFSS, GFAA…HQLF, and MGYA…MWLV. RCK C-terminal domains are found at residues 191–276 and 279–361; these read DLFE…VLGE and ETSL…VVGN. 6 consecutive transmembrane segments (helical) span residues 371–391, 403–425, 439–459, 465–485, 493–513, and 533–553; these read MLPV…PFYL, AGGP…LYWF, IVLF…DTLI, AWMM…GVLA, YLTL…LAFA, and LVMF…WAGV.

The protein belongs to the AAE transporter (TC 2.A.81) family. YidE subfamily.

It is found in the cell membrane. The chain is Putative transport protein ASA_0825 from Aeromonas salmonicida (strain A449).